Reading from the N-terminus, the 950-residue chain is UvrABC system protein A (950 aa).

Position 36 to 43 (36 to 43 (GKSGSGKS)) interacts with ATP. The segment at 260–287 (CPLCGFSLPLIEPRLFSFNSPFGACSEC) adopts a C4-type zinc-finger fold. ABC transporter domains are found at residues 317-599 (FKTS…KNSL) and 619-947 (ADKG…MFLK). ATP is bound at residue 651–658 (GVSGSGKS). The C4-type zinc finger occupies 750–776 (CEKCQGDGYLNIQMHFLPDVFVPCDLC).

This sequence belongs to the ABC transporter superfamily. UvrA family. In terms of assembly, forms a heterotetramer with UvrB during the search for lesions.

The protein localises to the cytoplasm. In terms of biological role, the UvrABC repair system catalyzes the recognition and processing of DNA lesions. UvrA is an ATPase and a DNA-binding protein. A damage recognition complex composed of 2 UvrA and 2 UvrB subunits scans DNA for abnormalities. When the presence of a lesion has been verified by UvrB, the UvrA molecules dissociate. The polypeptide is UvrABC system protein A (Borreliella burgdorferi (strain ATCC 35210 / DSM 4680 / CIP 102532 / B31) (Borrelia burgdorferi)).